The following is a 399-amino-acid chain: Tyrosine--tRNA ligase (399 aa).

Positions 44–53 match the 'HIGH' region motif; sequence PTAPDLHLGH. Positions 229-233 match the 'KMSKS' region motif; sequence KMSKS. An ATP-binding site is contributed by Lys-232. The 61-residue stretch at 338 to 398 folds into the S4 RNA-binding domain; sequence ISITKALVDC…GKRKFAKLKV (61 aa).

This sequence belongs to the class-I aminoacyl-tRNA synthetase family. TyrS type 2 subfamily. In terms of assembly, homodimer.

The protein resides in the cytoplasm. The enzyme catalyses tRNA(Tyr) + L-tyrosine + ATP = L-tyrosyl-tRNA(Tyr) + AMP + diphosphate + H(+). Functionally, catalyzes the attachment of tyrosine to tRNA(Tyr) in a two-step reaction: tyrosine is first activated by ATP to form Tyr-AMP and then transferred to the acceptor end of tRNA(Tyr). The polypeptide is Tyrosine--tRNA ligase (Sulfurimonas denitrificans (strain ATCC 33889 / DSM 1251) (Thiomicrospira denitrificans (strain ATCC 33889 / DSM 1251))).